The chain runs to 296 residues: Fructose-bisphosphate aldolase class 1 (296 aa).

The active-site Proton acceptor is the E175. K212 functions as the Schiff-base intermediate with dihydroxyacetone-P in the catalytic mechanism.

The protein belongs to the class I fructose-bisphosphate aldolase family.

It catalyses the reaction beta-D-fructose 1,6-bisphosphate = D-glyceraldehyde 3-phosphate + dihydroxyacetone phosphate. Its pathway is carbohydrate degradation; glycolysis; D-glyceraldehyde 3-phosphate and glycerone phosphate from D-glucose: step 4/4. This chain is Fructose-bisphosphate aldolase class 1, found in Staphylococcus haemolyticus (strain JCSC1435).